A 341-amino-acid polypeptide reads, in one-letter code: Anthranilate phosphoribosyltransferase (341 aa).

Residues G81, 84-85 (GD), 91-94 (NVST), 109-117 (KHGNRSVSS), and S121 each bind 5-phospho-alpha-D-ribose 1-diphosphate. G81 provides a ligand contact to anthranilate. S93 contacts Mg(2+). N112 serves as a coordination point for anthranilate. R167 is an anthranilate binding site. 2 residues coordinate Mg(2+): D226 and E227.

The protein belongs to the anthranilate phosphoribosyltransferase family. In terms of assembly, homodimer. Mg(2+) serves as cofactor.

It catalyses the reaction N-(5-phospho-beta-D-ribosyl)anthranilate + diphosphate = 5-phospho-alpha-D-ribose 1-diphosphate + anthranilate. The protein operates within amino-acid biosynthesis; L-tryptophan biosynthesis; L-tryptophan from chorismate: step 2/5. Catalyzes the transfer of the phosphoribosyl group of 5-phosphorylribose-1-pyrophosphate (PRPP) to anthranilate to yield N-(5'-phosphoribosyl)-anthranilate (PRA). The polypeptide is Anthranilate phosphoribosyltransferase (Teredinibacter turnerae (strain ATCC 39867 / T7901)).